The primary structure comprises 38 residues: DNA binding protein VP8 (38 aa).

Residues 1-16 (MKRKPMSRKASQKTFK) are compositionally biased toward basic residues. Positions 1 to 38 (MKRKPMSRKASQKTFKKNTGVQRMNHLNPRAMRGGIRL) are disordered.

Belongs to the microviridae J protein family.

The protein localises to the virion. It is found in the host cytoplasm. Mediates ssDNA packaging into virion, it locates to the internal surface of the capsid, thereby displacing the internal scaffolding protein VP3 during virion formation. Additionally, protein VP8 plays a role in viral attachment to the host cell. The sequence is that of DNA binding protein VP8 from Bdellovibrio phage phiMH2K (Bacteriophage phiMH2K).